Reading from the N-terminus, the 477-residue chain is Aspartyl/glutamyl-tRNA(Asn/Gln) amidotransferase subunit B (477 aa).

The protein belongs to the GatB/GatE family. GatB subfamily. Heterotrimer of A, B and C subunits.

It catalyses the reaction L-glutamyl-tRNA(Gln) + L-glutamine + ATP + H2O = L-glutaminyl-tRNA(Gln) + L-glutamate + ADP + phosphate + H(+). It carries out the reaction L-aspartyl-tRNA(Asn) + L-glutamine + ATP + H2O = L-asparaginyl-tRNA(Asn) + L-glutamate + ADP + phosphate + 2 H(+). In terms of biological role, allows the formation of correctly charged Asn-tRNA(Asn) or Gln-tRNA(Gln) through the transamidation of misacylated Asp-tRNA(Asn) or Glu-tRNA(Gln) in organisms which lack either or both of asparaginyl-tRNA or glutaminyl-tRNA synthetases. The reaction takes place in the presence of glutamine and ATP through an activated phospho-Asp-tRNA(Asn) or phospho-Glu-tRNA(Gln). The protein is Aspartyl/glutamyl-tRNA(Asn/Gln) amidotransferase subunit B of Streptococcus gordonii (strain Challis / ATCC 35105 / BCRC 15272 / CH1 / DL1 / V288).